The chain runs to 299 residues: Very long chain fatty acid elongase 5 (299 aa).

Methionine 1 carries the N-acetylmethionine modification. The next 6 helical transmembrane spans lie at tryptophan 26–valine 46, isoleucine 64–valine 84, valine 112–leucine 132, methionine 150–alanine 170, glycine 205–cysteine 225, and threonine 226–phenylalanine 246. The segment at alanine 275 to aspartate 299 is disordered. Residues glycine 279–glutamate 288 show a composition bias toward polar residues. Phosphoserine is present on serine 285.

It belongs to the ELO family. ELOVL5 subfamily. As to quaternary structure, interacts with TECR.

The protein localises to the endoplasmic reticulum membrane. The protein resides in the cell projection. It localises to the dendrite. The enzyme catalyses a very-long-chain acyl-CoA + malonyl-CoA + H(+) = a very-long-chain 3-oxoacyl-CoA + CO2 + CoA. It catalyses the reaction (6Z,9Z,12Z)-octadecatrienoyl-CoA + malonyl-CoA + H(+) = (8Z,11Z,14Z)-3-oxoeicosatrienoyl-CoA + CO2 + CoA. The catalysed reaction is (9Z,12Z,15Z)-octadecatrienoyl-CoA + malonyl-CoA + H(+) = (11Z,14Z,17Z)-3-oxoeicosatrienoyl-CoA + CO2 + CoA. It carries out the reaction (9Z)-hexadecenoyl-CoA + malonyl-CoA + H(+) = 3-oxo-(11Z)-octadecenoyl-CoA + CO2 + CoA. The enzyme catalyses (9Z)-octadecenoyl-CoA + malonyl-CoA + H(+) = 3-oxo-(11Z)-eicosenoyl-CoA + CO2 + CoA. It catalyses the reaction (11Z)-octadecenoyl-CoA + malonyl-CoA + H(+) = 3-oxo-(13Z)-eicosenoyl-CoA + CO2 + CoA. The catalysed reaction is (9Z,12Z)-octadecadienoyl-CoA + malonyl-CoA + H(+) = (11Z,14Z)-3-oxoicosa-11,14-dienoyl-CoA + CO2 + CoA. It carries out the reaction (6Z,9Z,12Z,15Z)-octadecatetraenoyl-CoA + malonyl-CoA + H(+) = (8Z,11Z,14Z,17Z)-3-oxoicosatetraenoyl-CoA + CO2 + CoA. The enzyme catalyses (5Z,8Z,11Z,14Z)-eicosatetraenoyl-CoA + malonyl-CoA + H(+) = (7Z,10Z,13Z,16Z)-3-oxodocosatetraenoyl-CoA + CO2 + CoA. It catalyses the reaction (5Z,8Z,11Z,14Z,17Z)-eicosapentaenoyl-CoA + malonyl-CoA + H(+) = 3-oxo-(7Z,10Z,13Z,16Z,19Z)-docosapentaenoyl-CoA + CO2 + CoA. It functions in the pathway lipid metabolism; polyunsaturated fatty acid biosynthesis. Its function is as follows. Catalyzes the first and rate-limiting reaction of the four reactions that constitute the long-chain fatty acids elongation cycle. This endoplasmic reticulum-bound enzymatic process allows the addition of 2 carbons to the chain of long- and very long-chain fatty acids (VLCFAs) per cycle. Condensing enzyme that acts specifically toward polyunsaturated acyl-CoA with the higher activity toward C18:3(n-6) acyl-CoA. May participate in the production of monounsaturated and of polyunsaturated VLCFAs of different chain lengths that are involved in multiple biological processes as precursors of membrane lipids and lipid mediators. In conditions where the essential linoleic and alpha linoleic fatty acids are lacking it is also involved in the synthesis of Mead acid from oleic acid. The sequence is that of Very long chain fatty acid elongase 5 from Macaca fascicularis (Crab-eating macaque).